A 584-amino-acid chain; its full sequence is Segmentation polarity homeobox protein engrailed (584 aa).

5 disordered regions span residues 1–27 (MALE…PQQH), 141–198 (EESD…SKPS), 343–380 (IGQA…SSST), 392–451 (CSSA…GGKN), and 465–492 (DRPS…PRTA). Over residues 12 to 23 (APSPPGCLPHSP) the composition is skewed to pro residues. Residues 160-174 (TEEDEEEDDDIDVDD) show a composition bias toward acidic residues. Over residues 189–198 (HQQSKQSKPS) the composition is skewed to polar residues. Low complexity-rich tracts occupy residues 348 to 380 (STTP…SSST) and 392 to 405 (CSSA…SPSS). Basic and acidic residues predominate over residues 478–489 (QPKDKTNDEKRP). Residues 486–545 (EKRPRTAFSSEQLARLKREFNENRYLTERRRQQLSSELGLNEAQIKIWFQNKRAKIKKST) constitute a DNA-binding region (homeobox).

It belongs to the engrailed homeobox family.

It localises to the nucleus. Its function is as follows. This protein specifies the body segmentation pattern. It is required for the development of the central nervous system. Transcriptional regulator that repress activated promoters. The chain is Segmentation polarity homeobox protein engrailed (en) from Drosophila virilis (Fruit fly).